Consider the following 304-residue polypeptide: Cyclin-dependent kinase 3 (304 aa).

The region spanning 4-286 (FQKVEKIGEG…AKTALAHPYF (283 aa)) is the Protein kinase domain. ATP contacts are provided by residues 10 to 18 (IGEGTYGVV) and K33. D127 acts as the Proton acceptor in catalysis.

This sequence belongs to the protein kinase superfamily. CMGC Ser/Thr protein kinase family. CDC2/CDKX subfamily. In terms of assembly, interacts with CABLES1 and ATF1. Binding to CCNC/cyclin-C promotes RB1 phosphorylation. Binds to CABLES2.

It carries out the reaction L-seryl-[protein] + ATP = O-phospho-L-seryl-[protein] + ADP + H(+). The enzyme catalyses L-threonyl-[protein] + ATP = O-phospho-L-threonyl-[protein] + ADP + H(+). In terms of biological role, serine/threonine-protein kinase that plays a critical role in the control of the eukaryotic cell cycle; involved in G0-G1 and G1-S cell cycle transitions. Interacts with CCNC/cyclin-C during interphase. Phosphorylates histone H1, ATF1, RB1 and CABLES1. ATF1 phosphorylation triggers ATF1 transactivation and transcriptional activities, and promotes cell proliferation and transformation. CDK3/cyclin-C mediated RB1 phosphorylation is required for G0-G1 transition. Promotes G1-S transition probably by contributing to the activation of E2F1, E2F2 and E2F3 in a RB1-independent manner. In Mus musculus (Mouse), this protein is Cyclin-dependent kinase 3 (Cdk3).